The chain runs to 545 residues: Tripartite motif-containing protein 55 (545 aa).

An RING-type zinc finger spans residues Cys26 to Arg82. The B box-type zinc-finger motif lies at Leu119–Leu161. Residues Cys124, His127, Cys147, and His153 each contribute to the Zn(2+) site. The stretch at Tyr219–Val258 forms a coiled coil. One can recognise a COS domain in the interval Met269–Ser327. 2 disordered regions span residues Ile324–Ala378 and Leu406–Ser528. Acidic residues predominate over residues Arg328–Glu355. 2 stretches are compositionally biased toward low complexity: residues Ser417–Ser426 and Ser469–Ser493. Residues Lys495–Ile506 show a composition bias toward polar residues. The span at Ala510–Leu520 shows a compositional bias: low complexity.

Homooligomer and heterooligomer. Interacts with titin/TTN. Interacts with myosins. Interacts with SQSTM1 and NBR1. Probably interacts with TRIM63 and TRIM54. Post-translationally, targeted for degradation through the proteasomal and lysosomal pathways in the presence of SUMO3.

It is found in the nucleus. Its subcellular location is the cytoplasm. It catalyses the reaction S-ubiquitinyl-[E2 ubiquitin-conjugating enzyme]-L-cysteine + [acceptor protein]-L-lysine = [E2 ubiquitin-conjugating enzyme]-L-cysteine + N(6)-ubiquitinyl-[acceptor protein]-L-lysine.. Its function is as follows. E3 ubiquitin ligase that plays an important role in regulating cardiac development and contractility, muscle growth, metabolism, and fiber-type differentiation. Acts as a critical factor that regulates cardiomyocyte size during development in concert with TRIM63 by regulating E2F1-mediated gene expression. Plays a role in apoptosis induction in cardiomyocytes by promoting ubiquitination of the DUSP1 phosphatase. Promotes non-canonical NF-kappa-B signaling and B-cell-mediated immune responses by mediating NFKB2 'Lys-48'-linked ubiquitination and processing. In turn, NFKB2 is further processed by valosin-containing protein/VCP, an ATPase that mediates ubiquitin-dependent protein degradation by the proteasome. May play a role in preventing macrophages from producing inflammatory factors and migrating by downregulating the level of nuclear NF-kappa-B subunit RELA. Also modifies PPARG via polyubiquitination and accelerates PPARG proteasomal degradation to inhibit its activity. The protein is Tripartite motif-containing protein 55 (Trim55) of Rattus norvegicus (Rat).